The primary structure comprises 204 residues: 3-isopropylmalate dehydratase small subunit (204 aa).

The protein belongs to the LeuD family. LeuD type 1 subfamily. Heterodimer of LeuC and LeuD.

It carries out the reaction (2R,3S)-3-isopropylmalate = (2S)-2-isopropylmalate. It participates in amino-acid biosynthesis; L-leucine biosynthesis; L-leucine from 3-methyl-2-oxobutanoate: step 2/4. Its function is as follows. Catalyzes the isomerization between 2-isopropylmalate and 3-isopropylmalate, via the formation of 2-isopropylmaleate. The chain is 3-isopropylmalate dehydratase small subunit from Psychromonas ingrahamii (strain DSM 17664 / CCUG 51855 / 37).